A 48-amino-acid polypeptide reads, in one-letter code: Sperm protamine P1 (48 aa).

The protein belongs to the protamine P1 family. In terms of tissue distribution, testis.

Its subcellular location is the nucleus. It localises to the chromosome. Functionally, protamines substitute for histones in the chromatin of sperm during the haploid phase of spermatogenesis. They compact sperm DNA into a highly condensed, stable and inactive complex. This chain is Sperm protamine P1 (PRM1), found in Murina cyclotis (Round-eared tube-nosed bat).